Here is a 1029-residue protein sequence, read N- to C-terminus: Multiple C2 domain and transmembrane region protein 6 (1029 aa).

In terms of domain architecture, C2 1 spans 1 to 111 (MNKLVVEIVD…SGVQRYPLDK (111 aa)). A disordered region spans residues 187-224 (TKKKEKESRTFHSIGAHAGGGGGAPPMSQAKQAYPPPP). 3 consecutive C2 domains span residues 277 to 398 (RSSG…PQWY), 437 to 562 (RVSH…PRWF), and 605 to 727 (FSSD…THFY). Asp310, Asp316, Asp363, Asp365, and Asp371 together coordinate Ca(2+). The next 2 helical transmembrane spans lie at 864 to 884 (LILV…LFVI) and 976 to 996 (FALI…AIII).

The protein belongs to the MCTP family. Ca(2+) serves as cofactor. As to expression, expressed in the vascular tissues of cotyledons and rosette leaves. Accumulates in roots caps and shoot apical meristems (SAMs). Observed in flowers.

It localises to the cell membrane. The protein resides in the cytoplasm. Its subcellular location is the endosome membrane. Regulates flowering time under long days. May function as a signaling molecule by regulating the trafficking of other regulators. This Arabidopsis thaliana (Mouse-ear cress) protein is Multiple C2 domain and transmembrane region protein 6.